Here is a 750-residue protein sequence, read N- to C-terminus: MEYTHQYSWIIPFIPFPVPMLIGVGLLLFPTATKYLRRMWAFPSILLLTIVMMFSLDLSIHQINNSSFYQYVWSWTINNDLSLEFGYLIDSLTSIMSILITTVGILVLIYSDNYMSHDQGYLRFFAYLTLFNISMLGLVTSSNLIQIYVFWELVGMCSYLLIGFWFTRPIAANACQKAFVTNRVGDFGLLLGILGLYWITGSLEFRDLFQIINNLIYKNEVNIFFLTLVALLLFCGSVAKSAQFPLHVWLPDAMEGPTPISALIHAATMVAAGIFLVARLLPLFIVLPAIMNGIAFIGIITVVLGATLAIAQQDIKKNLAYSTMSQLGYMMLALGMGSYRAALFHLITHAYSKALLFLGSGSIIHSMEALVGYSPAKSQNMVLMGGLTKHVPITKTSFLVGTLSLCGIPPFACFWSKDEILNDSWLYSPIFAIIACCTAGLTAFYMFRIYLLVFEGYLNVHFLNFNGKKNSSFYSISLWGKKEVKQKLKNKNFFLALLRMKNNEMTSFFIRKIYPHRINQNVKNITCLFFDINYFGTKKTACLYPNESDNTMRFSILVLVLFTLFVGTIGISFSYKGIDFDILSKWLIPFIDLLHKNSKNFVDWYEFLTNAAFSVILTFLGIFIASFFYKPVYSDLQNLNLLNLFEKNVLNKKVADYFQNVIYDWSYNRGYIDVFYDISLITSVRKLVQFNYFFDKKIIDAIPNGIGITSFFMGEAIKYVGGGRISSYILLYIFYIVIFILIWYFLFTNI.

Helical transmembrane passes span 9–29, 40–60, 89–109, 125–145, 147–167, 185–205, 219–239, 258–278, 280–300, 327–347, 354–374, 396–416, 425–445, 554–574, 607–627, and 728–748; these read WIIP…LLLF, WAFP…DLSI, IDSL…LVLI, FAYL…SNLI, IYVF…FWFT, GDFG…SLEF, NEVN…GSVA, TPIS…FLVA, LLPL…IGII, LGYM…FHLI, ALLF…VGYS, TSFL…CFWS, WLYS…TAFY, FSIL…ISFS, FLTN…IASF, and YILL…FLFT.

Belongs to the complex I subunit 5 family. As to quaternary structure, NDH is composed of at least 16 different subunits, 5 of which are encoded in the nucleus.

Its subcellular location is the plastid. The protein resides in the chloroplast thylakoid membrane. The catalysed reaction is a plastoquinone + NADH + (n+1) H(+)(in) = a plastoquinol + NAD(+) + n H(+)(out). The enzyme catalyses a plastoquinone + NADPH + (n+1) H(+)(in) = a plastoquinol + NADP(+) + n H(+)(out). Its function is as follows. NDH shuttles electrons from NAD(P)H:plastoquinone, via FMN and iron-sulfur (Fe-S) centers, to quinones in the photosynthetic chain and possibly in a chloroplast respiratory chain. The immediate electron acceptor for the enzyme in this species is believed to be plastoquinone. Couples the redox reaction to proton translocation, and thus conserves the redox energy in a proton gradient. The protein is NAD(P)H-quinone oxidoreductase subunit 5, chloroplastic (ndhF) of Glycine max (Soybean).